Consider the following 242-residue polypeptide: Transcription factor bHLH100 (242 aa).

In terms of domain architecture, bHLH spans 61–113 (MKKLNHNASERERRKKINTMFSSLRSCLPPTNQTKKLSVSATVSQALKYIPEL).

Homodimer. As to expression, expressed constitutively in roots, leaves, and stems.

It localises to the nucleus. Plays a role in metal homeostasis. Confers tolerance to high zinc (Zn) and nickel (Ni). In Arabidopsis thaliana (Mouse-ear cress), this protein is Transcription factor bHLH100 (BHLH100).